Reading from the N-terminus, the 160-residue chain is Protein-export protein SecB (160 aa).

Belongs to the SecB family. Homotetramer, a dimer of dimers. One homotetramer interacts with 1 SecA dimer.

The protein localises to the cytoplasm. One of the proteins required for the normal export of preproteins out of the cell cytoplasm. It is a molecular chaperone that binds to a subset of precursor proteins, maintaining them in a translocation-competent state. It also specifically binds to its receptor SecA. This chain is Protein-export protein SecB, found in Aliivibrio salmonicida (strain LFI1238) (Vibrio salmonicida (strain LFI1238)).